Consider the following 420-residue polypeptide: CinA-like protein (420 aa).

It belongs to the CinA family.

This Syntrophus aciditrophicus (strain SB) protein is CinA-like protein.